A 378-amino-acid polypeptide reads, in one-letter code: tRNA-specific 2-thiouridylase MnmA (378 aa).

ATP-binding positions include 9-16 and M35; that span reads GVSGGVDS. The tract at residues 94 to 96 is interaction with target base in tRNA; sequence NPD. C99 functions as the Nucleophile in the catalytic mechanism. The cysteines at positions 99 and 195 are disulfide-linked. An ATP-binding site is contributed by G123. An interaction with tRNA region spans residues 145 to 147; sequence KDQ. The Cysteine persulfide intermediate role is filled by C195. Residues 307 to 308 are interaction with tRNA; sequence RY.

It belongs to the MnmA/TRMU family.

It localises to the cytoplasm. It catalyses the reaction S-sulfanyl-L-cysteinyl-[protein] + uridine(34) in tRNA + AH2 + ATP = 2-thiouridine(34) in tRNA + L-cysteinyl-[protein] + A + AMP + diphosphate + H(+). Functionally, catalyzes the 2-thiolation of uridine at the wobble position (U34) of tRNA, leading to the formation of s(2)U34. This Xanthomonas campestris pv. campestris (strain 8004) protein is tRNA-specific 2-thiouridylase MnmA.